The following is a 136-amino-acid chain: MARTKQTARKSTGGKAPRKQLATKAARKSAPATGGVKKPHRFRPGTVALREIRKYQKSTELLIRKLPFQRLVREIAQDFKTDLRFQSSAVSALQEAAEAYLVGLFEDTNLCAIHAKRVTIMPKDIQLARRIRGERA.

Residues 1-43 (MARTKQTARKSTGGKAPRKQLATKAARKSAPATGGVKKPHRFR) form a disordered region. N6-methylated lysine is present on lysine 5. Lysine 10 carries the N6-acetyllysine; alternate modification. An N6-methylated lysine; alternate modification is found at lysine 10. At serine 11 the chain carries Phosphoserine. The residue at position 12 (threonine 12) is a Phosphothreonine. Residue lysine 15 is modified to N6-acetyllysine. N6-acetyllysine; alternate is present on residues lysine 19 and lysine 24. N6-methylated lysine; alternate occurs at positions 19 and 24. Lysine 28 is subject to N6-methylated lysine. Serine 29 carries the post-translational modification Phosphoserine. Lysine 37 is modified (N6-methylated lysine).

It belongs to the histone H3 family. In terms of assembly, the nucleosome is a histone octamer containing two molecules each of H2A, H2B, H3 and H4 assembled in one H3-H4 heterotetramer and two H2A-H2B heterodimers. The octamer wraps approximately 147 bp of DNA. In terms of processing, acetylation is generally linked to gene activation. Can be acetylated to form H3K9ac, H3K14ac, H3K18ac and H3K23ac. H3K9ac could compete with H3K9me and prevent gene silencing. H3K9ac is restricted to euchromatin. Methylated to form mainly H3K4me, H3K9me, H3K18me, H3K23me, H3K27me and H3K36me. H3K4me1/2/3, H3K9me3, H3K27me3 and H3K36me1/2/3 are typical marks for euchromatin, whereas heterochromatic chromocenters are enriched in H3K9me1/2 and H3K27me1/2. H2BK143ub1 is probably prerequisite for H3K4me. Post-translationally, can be phosphorylated to form H3S10ph, H3T11ph and H3S28ph.

The protein resides in the nucleus. It is found in the chromosome. In terms of biological role, core component of nucleosome. Nucleosomes wrap and compact DNA into chromatin, limiting DNA accessibility to the cellular machineries which require DNA as a template. Histones thereby play a central role in transcription regulation, DNA repair, DNA replication and chromosomal stability. DNA accessibility is regulated via a complex set of post-translational modifications of histones, also called histone code, and nucleosome remodeling. The sequence is that of Histone H3.2 from Triticum aestivum (Wheat).